The primary structure comprises 765 residues: Ubiquitin-like modifier-activating enzyme atg7 (765 aa).

The GXGXXG motif signature appears at 436-441; the sequence is GAGTLG. Catalysis depends on Cys-616, which acts as the Glycyl thioester intermediate. Disordered stretches follow at residues 646–670 and 744–765; these read AAPA…PPNH and AAND…PELL. Positions 721 to 760 are homodimerization; the sequence is ALTEKDYITELSGLAEVQRKAEAAANDVEWDSDEEGMEDE. Residues 748-765 show a composition bias toward acidic residues; that stretch reads VEWDSDEEGMEDEEPELL.

Belongs to the ATG7 family. As to quaternary structure, homodimer. Interacts with ATG8 through a thioester bond between Cys-616 and the C-terminal Gly of ATG8 and with ATG12 through a thioester bond between Cys-616 and the C-terminal Gly of ATG12. Also interacts with ATG3.

The protein resides in the cytoplasm. It localises to the preautophagosomal structure. In terms of biological role, E1-like activating enzyme involved in the 2 ubiquitin-like systems required for cytoplasm to vacuole transport (Cvt) and autophagy. Activates ATG12 for its conjugation with ATG5 and ATG8 for its conjugation with phosphatidylethanolamine. Both systems are needed for the ATG8 association to Cvt vesicles and autophagosomes membranes. Autophagy is essential for maintenance of amino acid levels and protein synthesis under nitrogen starvation. Required for selective autophagic degradation of the nucleus (nucleophagy) as well as for mitophagy which contributes to regulate mitochondrial quantity and quality by eliminating the mitochondria to a basal level to fulfill cellular energy requirements and preventing excess ROS production. Required for normal mycelial growth and conidiogenesis, and regulates sclerotial formation. Plays an essential role in pathogenesis. The polypeptide is Ubiquitin-like modifier-activating enzyme atg7 (Botryotinia fuckeliana (strain BcDW1) (Noble rot fungus)).